The chain runs to 436 residues: MTDLTPREIVSELDRFIIGQKDAKRAVAVALRNRWRRKQLPDDLRDEVHPKNILMIGPTGVGKTEISRRLAKLARAPFIKVEATKFTEVGYVGRDVEQIVRDLVDTAIVQTREHMREDVKAKAHKAAEDRVLEAIAGTDARESTLEMFRKKLKAGELDDTVIELDIADTSNPMGGMFEIPGQPGANMGMMNLGDLFGKAMGGRTTRKKLTVAESYDVLIGEEADKLLDDETVNKAALEAVEQNGIVFLDEIDKVCARSDARGGDVSREGVQRDLLPLIEGTTVSTKHGPVKTDHILFIASGAFHIAKPSDLLPELQGRLPIRVNLRALSEEDFVRILTETDNALTRQYEALLGTEKVKVTFTKDGIHALAQIAAEVNHTVENIGARRLYTVMERVFEEMSFAAPDRSGEEIIVDEPFVTKNLGELTKSTDLSRYVL.

ATP contacts are provided by residues isoleucine 18, 60 to 65 (GVGKTE), aspartate 249, glutamate 314, and arginine 386.

This sequence belongs to the ClpX chaperone family. HslU subfamily. A double ring-shaped homohexamer of HslV is capped on each side by a ring-shaped HslU homohexamer. The assembly of the HslU/HslV complex is dependent on binding of ATP.

It is found in the cytoplasm. In terms of biological role, ATPase subunit of a proteasome-like degradation complex; this subunit has chaperone activity. The binding of ATP and its subsequent hydrolysis by HslU are essential for unfolding of protein substrates subsequently hydrolyzed by HslV. HslU recognizes the N-terminal part of its protein substrates and unfolds these before they are guided to HslV for hydrolysis. The chain is ATP-dependent protease ATPase subunit HslU from Ruegeria sp. (strain TM1040) (Silicibacter sp.).